We begin with the raw amino-acid sequence, 539 residues long: Chaperonin GroEL (539 aa).

Residues 29–32, 86–90, G413, 476–478, and D492 contribute to the ATP site; these read TLGP, DGTTT, and NAA.

It belongs to the chaperonin (HSP60) family. As to quaternary structure, forms a cylinder of 14 subunits composed of two heptameric rings stacked back-to-back. Interacts with the co-chaperonin GroES.

It is found in the cytoplasm. The enzyme catalyses ATP + H2O + a folded polypeptide = ADP + phosphate + an unfolded polypeptide.. Functionally, together with its co-chaperonin GroES, plays an essential role in assisting protein folding. The GroEL-GroES system forms a nano-cage that allows encapsulation of the non-native substrate proteins and provides a physical environment optimized to promote and accelerate protein folding. The protein is Chaperonin GroEL of Geobacillus sp. (strain WCH70).